The primary structure comprises 1093 residues: Regulator of nonsense transcripts 1 homolog (1093 aa).

The disordered stretch occupies residues 42 to 79 (YGVYGGRGPRGNGRRRHDDDDNETEVLDDDDDESLASV). Residues 61–75 (DDNETEVLDDDDDES) show a composition bias toward acidic residues. Residues 95–252 (EKELPPHACA…AKLEEMWKEA (158 aa)) enclose the Upf1 CH-rich domain. Positions 103, 106, 117, 120, 125, 135, 139, 145, 163, 166, 189, and 193 each coordinate Zn(2+). Residues 103–135 (CAYCGIHSPSSVVKCLTCNKWFCSAKGSAFSSH) are C3H. Residues 117–145 (CLTCNKWFCSAKGSAFSSHIVNHLVRARH) form a CC/SHH/C region. The interval 163–193 (CYNCGTKNVFILGFIPAKSDTVVVLLCRQPC) is C4. ATP-binding positions include Gln460, 480–484 (GTGKT), Gln650, Tyr687, and Glu818.

The protein belongs to the DNA2/NAM7 helicase family.

Its subcellular location is the cytoplasm. It carries out the reaction ATP + H2O = ADP + phosphate + H(+). In terms of biological role, RNA-dependent helicase required for nonsense-mediated decay (NMD) of aberrant mRNAs containing premature stop codons and modulates the expression level of normal mRNAs. Also capable of unwinding double-stranded DNA and translocating on single-stranded DNA. The protein is Regulator of nonsense transcripts 1 homolog of Neurospora crassa (strain ATCC 24698 / 74-OR23-1A / CBS 708.71 / DSM 1257 / FGSC 987).